The chain runs to 440 residues: MVLLYTPPQKINKLQREMEVEILDLDYQGLGVAKIQGKTWFVENALPGEKVRIKIKEEKRQFGLATTKKILEASAQRQTPKCQYASRCGGCQNQHIPVEMQREAKQKALFRRLLKLQPEGIEFMPMIVGEAFGYRRRVRLSMLFDGKLKRLEIGFRQKNSAQIVHIEQCEVIEPALNKILSKLTALLSRFSQPKNLGHIELVAADNGVAMLLRYSGKLTENDRTLLLDFAVREELMLFLQDDEKTEQIYGQPPFYQLADNLQLQFDIRDFIQVNSLLNQRMITAALDWLDVQKQDHVLDLFCGMGNFTLPLSRRVKSAVGIEGISAMVEKAKANAERNQCQNVQFYRADLDQNFADEVWATEPFNKILLDPPRTGAAFALNALCRLKAEKILYVSCNPATLVRDAEILLNSDYRVKKVAMIDMFPHTGHLESITLFEKQS.

Residues 8–69 (PQKINKLQRE…RQFGLATTKK (62 aa)) form the TRAM domain. 4 residues coordinate [4Fe-4S] cluster: cysteine 82, cysteine 88, cysteine 91, and cysteine 169. Positions 272, 301, 306, 322, 349, and 370 each coordinate S-adenosyl-L-methionine. Cysteine 396 serves as the catalytic Nucleophile.

Belongs to the class I-like SAM-binding methyltransferase superfamily. RNA M5U methyltransferase family. RlmD subfamily.

The catalysed reaction is uridine(1939) in 23S rRNA + S-adenosyl-L-methionine = 5-methyluridine(1939) in 23S rRNA + S-adenosyl-L-homocysteine + H(+). Catalyzes the formation of 5-methyl-uridine at position 1939 (m5U1939) in 23S rRNA. The protein is 23S rRNA (uracil(1939)-C(5))-methyltransferase RlmD of Mannheimia succiniciproducens (strain KCTC 0769BP / MBEL55E).